The primary structure comprises 379 residues: MASDWRRQSTSRGIPNEGQNDEKGKPLIGRSFLLEIENRILRTNVAEGLHISGATIIDSFDDASPQCVISDHPMAQKLEKAKKDDPLFKNEKMLKIMPALLRQAVNRNIKVRTPERFLNQMNTWLDRQGKTTSATTSNSTIRGKPSFGRENSAKIERTTPRLVPRMPRVSSDQTSSRPKEERCFLRIDVPGKRPEIRNVSKESFSIVYSGRDTGFSIFKAAESSLVERRQREYDSFLKGKYEPSKKTFKFDERDNYCQFCQKTILGDRKDHERTDEHRNKARTQGITQTMERIVLNARLRAERQEAALKRNQRKSRESVMFVEKSKRANVEYEYGENEIKANWLMLKANTVEKTTEKTSILSPRRRQKRMRSLSSQGDI.

Disordered stretches follow at residues Met1–Lys25, Gln128–Thr158, and Thr355–Ile379. A compositionally biased stretch (polar residues) spans Gln128–Ile141.

This is an uncharacterized protein from Caenorhabditis elegans.